The chain runs to 1095 residues: Voltage-gated inwardly rectifying potassium channel KCNH3 (1095 aa).

Residues 1–228 are Cytoplasmic-facing; sequence MPAMRGLLAP…HCGALRATWD (228 aa). In terms of domain architecture, PAS spans 18-90; the sequence is IATRFDGTHS…QQIRKALDEH (73 aa). The 53-residue stretch at 93 to 145 folds into the PAC domain; the sequence is FKAELILYRKSGLPFWCLLDVIPIKNEKGEVALFLVSHKDISETKNRGGPDNW. Residues 137-150 show a composition bias toward basic and acidic residues; that stretch reads KNRGGPDNWKERGG. Residues 137–161 are disordered; that stretch reads KNRGGPDNWKERGGGRRRYGRAGSK. A helical transmembrane segment spans residues 229–249; that stretch reads GFILLATLYVAVTVPYSVCVS. Topologically, residues 250 to 259 are extracellular; sequence TAREPSAARG. Residues 260–280 traverse the membrane as a helical segment; that stretch reads PPSVCDLAVEVLFILDIVLNF. At 281 to 302 the chain is on the cytoplasmic side; sequence RTTFVSKSGQVVFAPKSICLHY. A helical transmembrane segment spans residues 303-323; that stretch reads VTTWFLLDVIAALPFDLLHAF. The Extracellular segment spans residues 324–331; the sequence is KVNVYVGA. The chain crosses the membrane as a helical; Voltage-sensor span at residues 332–352; that stretch reads HLLKTVRLLRLLRLLPRLDRY. Residues 353 to 361 are Cytoplasmic-facing; that stretch reads SQYSAVVLT. A helical transmembrane segment spans residues 362 to 382; sequence LLMAVFALLAHWVACVWFYIG. Over 383 to 464 the chain is Extracellular; sequence QQEIESSESE…GGPSLRSAYI (82 aa). The tract at residues 417–447 is disordered; sequence PDGGNSSGQSENCSSSSSSSGSGGGRGSEAN. The span at 419-436 shows a compositional bias: low complexity; sequence GGNSSGQSENCSSSSSSS. N-linked (GlcNAc...) asparagine glycosylation is found at asparagine 421, asparagine 428, and asparagine 447. Positions 465–485 form an intramembrane region, pore-forming; it reads TSLYFALSSLTSVGFGNVSAN. A Selectivity filter motif is present at residues 476–481; that stretch reads SVGFGN. Over 486–490 the chain is Extracellular; that stretch reads TDTEK. A helical membrane pass occupies residues 491–511; the sequence is IFSICTMLIGALMHAVVFGNV. Residues 512–1095 are Cytoplasmic-facing; sequence TAIIQRMYAR…QWTQEEGTGV (584 aa). 593–708 contributes to the a nucleoside 3',5'-cyclic phosphate binding site; sequence LFEAASRGCL…FAPRFSRGLR (116 aa). 3 disordered regions span residues 740 to 823, 854 to 883, and 965 to 1069; these read EEKE…LPPM, VGQSGPECSSSPSPGTESGLLTVPLGPSEA, and GSVL…PWDP. The segment covering 784-796 has biased composition (basic residues); that stretch reads TAPRPRLGGRGRP. Positions 857–872 are enriched in low complexity; that stretch reads SGPECSSSPSPGTESG. Residues 974–991 show a composition bias toward pro residues; sequence HPRPGQPPPLMAPWPWGP.

Belongs to the potassium channel family. H (Eag) (TC 1.A.1.20) subfamily. Kv12.2/KCNH3 sub-subfamily. The potassium channel is probably composed of a homo- or heterotetrameric complex of pore-forming alpha subunits that can associate with modulating beta subunits. Interacts with KCNE1 and KCNE3; these interactions regulate KCNH3 trafficking to the plasma membrane and its subsequent voltage-gated potassium channel activity. In terms of processing, N-glycosylated. N-glycosylation mediates traffick to the cell membrane but is not necessary for voltage-gated potassium channel activity. In terms of tissue distribution, detected in brain, but not in other tissues.

The protein resides in the cell membrane. The catalysed reaction is K(+)(in) = K(+)(out). Functionally, pore-forming (alpha) subunit of a voltage-gated inwardly rectifying potassium channel. Charactherized by a fast rate of activation during depolarization followed by a rapid inactivation at much more depolarized value causing inward rectification due to a C-type inactivation mechanism. Exhibits a rapid recovery from inactivation. In Mus musculus (Mouse), this protein is Voltage-gated inwardly rectifying potassium channel KCNH3.